The sequence spans 517 residues: C-22 sterol desaturase ERG5 (517 aa).

Residues 21–41 traverse the membrane as a helical segment; the sequence is LAVAKATGSPITTLFTIIFLI. Cys-458 is a heme binding site.

It belongs to the cytochrome P450 family. Heme serves as cofactor.

The protein resides in the endoplasmic reticulum membrane. It carries out the reaction 5-dehydroepisterol + NADPH + O2 + H(+) = ergosta-5,7,22,24(28)-tetraen-3beta-ol + NADP(+) + 2 H2O. Its pathway is steroid metabolism; ergosterol biosynthesis; ergosterol from zymosterol: step 4/5. Functionally, C-22 sterol desaturase; part of the third module of ergosterol biosynthesis pathway that includes the late steps of the pathway. ERG5 converts 5-dehydroepisterol into ergosta-5,7,22,24(28)-tetraen-3beta-ol by forming the C-22(23) double bond in the sterol side chain. The third module or late pathway involves the ergosterol synthesis itself through consecutive reactions that mainly occur in the endoplasmic reticulum (ER) membrane. Firstly, the squalene synthase ERG9 catalyzes the condensation of 2 farnesyl pyrophosphate moieties to form squalene, which is the precursor of all steroids. Squalene synthase is crucial for balancing the incorporation of farnesyl diphosphate (FPP) into sterol and nonsterol isoprene synthesis. Secondly, the squalene epoxidase ERG1 catalyzes the stereospecific oxidation of squalene to (S)-2,3-epoxysqualene, which is considered to be a rate-limiting enzyme in steroid biosynthesis. Then, the lanosterol synthase ERG7 catalyzes the cyclization of (S)-2,3 oxidosqualene to lanosterol, a reaction that forms the sterol core. In the next steps, lanosterol is transformed to zymosterol through a complex process involving various demethylation, reduction and desaturation reactions. The lanosterol 14-alpha-demethylase ERG11 (also known as CYP51) catalyzes C14-demethylation of lanosterol to produce 4,4'-dimethyl cholesta-8,14,24-triene-3-beta-ol, which is critical for ergosterol biosynthesis. The C-14 reductase ERG24 reduces the C14=C15 double bond of 4,4-dimethyl-cholesta-8,14,24-trienol to produce 4,4-dimethyl-cholesta-8,24-dienol. 4,4-dimethyl-cholesta-8,24-dienol is substrate of the C-4 demethylation complex ERG25-ERG26-ERG27 in which ERG25 catalyzes the three-step monooxygenation required for the demethylation of 4,4-dimethyl and 4alpha-methylsterols, ERG26 catalyzes the oxidative decarboxylation that results in a reduction of the 3-beta-hydroxy group at the C-3 carbon to an oxo group, and ERG27 is responsible for the reduction of the keto group on the C-3. ERG28 has a role as a scaffold to help anchor ERG25, ERG26 and ERG27 to the endoplasmic reticulum and ERG29 regulates the activity of the iron-containing C4-methylsterol oxidase ERG25. Then, the sterol 24-C-methyltransferase ERG6 catalyzes the methyl transfer from S-adenosyl-methionine to the C-24 of zymosterol to form fecosterol. The C-8 sterol isomerase ERG2 catalyzes the reaction which results in unsaturation at C-7 in the B ring of sterols and thus converts fecosterol to episterol. The sterol-C5-desaturase ERG3 then catalyzes the introduction of a C-5 double bond in the B ring to produce 5-dehydroepisterol. The C-22 sterol desaturase ERG5 further converts 5-dehydroepisterol into ergosta-5,7,22,24(28)-tetraen-3beta-ol by forming the C-22(23) double bond in the sterol side chain. Finally, ergosta-5,7,22,24(28)-tetraen-3beta-ol is substrate of the C-24(28) sterol reductase ERG4 to produce ergosterol. In Candida albicans (strain SC5314 / ATCC MYA-2876) (Yeast), this protein is C-22 sterol desaturase ERG5.